The sequence spans 137 residues: 3-hydroxyacyl-[acyl-carrier-protein] dehydratase FabZ (137 aa).

H46 is an active-site residue.

Belongs to the thioester dehydratase family. FabZ subfamily.

It localises to the cytoplasm. It carries out the reaction a (3R)-hydroxyacyl-[ACP] = a (2E)-enoyl-[ACP] + H2O. In terms of biological role, involved in unsaturated fatty acids biosynthesis. Catalyzes the dehydration of short chain beta-hydroxyacyl-ACPs and long chain saturated and unsaturated beta-hydroxyacyl-ACPs. The polypeptide is 3-hydroxyacyl-[acyl-carrier-protein] dehydratase FabZ (Thermotoga neapolitana (strain ATCC 49049 / DSM 4359 / NBRC 107923 / NS-E)).